Reading from the N-terminus, the 586-residue chain is A-type ATP synthase subunit A (586 aa).

238–245 (GPFGSGKT) is an ATP binding site.

This sequence belongs to the ATPase alpha/beta chains family. Has multiple subunits with at least A(3), B(3), C, D, E, F, H, I and proteolipid K(x).

The protein resides in the cell membrane. It carries out the reaction ATP + H2O + 4 H(+)(in) = ADP + phosphate + 5 H(+)(out). Functionally, component of the A-type ATP synthase that produces ATP from ADP in the presence of a proton gradient across the membrane. The A chain is the catalytic subunit. This is A-type ATP synthase subunit A from Haloferax volcanii (strain ATCC 29605 / DSM 3757 / JCM 8879 / NBRC 14742 / NCIMB 2012 / VKM B-1768 / DS2) (Halobacterium volcanii).